Reading from the N-terminus, the 430-residue chain is MRLEVGNIFIKDIQFGDSTKVENGVLYVNKQELISELSSDEHIKSIDMEIVRPGESVRIAPVKDVIEPRVKVEGNGGIFPGFLSKVDTVGEGKTNVLKGAAVVTTGKVVGFQEGIIDMTGPGADYTPFSKTCNVVIIAEPVDGLKQHDHEAALRMVGLKAGKYLGEAGRNITPDEVKVYETKPIFESVKEYPNLPKVAYVYMLQTQGLLHDTYVYGVDAKKIIPTLIYPTEVMDGAILSGNCVSACDKNPTYVHMNNPVIHDLYELHGKEYNFVGVIITNENVYLADKERSSNWTAKMAEYLGLDGVIISEEGFGNPDTDLIMNCKKITKKGIKTVILTDEYAGRDGASQSLADADAAADACVTGGNANMTIVLPKLDKIIGHVSKDVIDVIAGGFDGSLRADGSIEVEIQAITGATSEVGFNKMTAKTY.

The Schiff-base intermediate with substrate; via pyruvic acid role is filled by Cys-242. Pyruvic acid (Cys) is present on Cys-242.

As to quaternary structure, heterohexamer of two alpha, two beta and two gamma subunits. Component of the glycine reductase complex, together with components A and C. PB is substrate specific. Post-translationally, the peptide chain is cleaved into beta and alpha chains, and the alpha chain N-terminal cysteine is deaminated and oxidized to form a reactive pyruvoyl group.

The enzyme catalyses acetyl phosphate + [thioredoxin]-disulfide + NH4(+) + H2O = [thioredoxin]-dithiol + glycine + phosphate + H(+). Its function is as follows. In the first step of glycine reductase, the substrate is bound to component PB via a Schiff base intermediate. Then the PB-activated substrate is nucleophilically attacked by the selenol anion of component PA to transform it to a carboxymethylated selenoether and the respective amine. By action of component PC, acetyl phosphate is formed, leaving component PA in its oxidized state. Finally component PA becomes reduced by the thioredoxin system to start a new catalytic cycle of reductive deamination. The protein is Glycine reductase complex component B subunits alpha and beta (grdE) of Acetoanaerobium sticklandii (strain ATCC 12662 / DSM 519 / JCM 1433 / CCUG 9281 / NCIMB 10654 / HF) (Clostridium sticklandii).